A 240-amino-acid polypeptide reads, in one-letter code: UDP-2,3-diacylglucosamine hydrolase (240 aa).

Mn(2+) contacts are provided by Asp7, His9, Asp40, Asn78, and His113. Position 78–79 (78–79) interacts with substrate; the sequence is NR. Residues Asp121, Ser159, Thr163, Lys166, and His194 each coordinate substrate. His194 and His196 together coordinate Mn(2+).

The protein belongs to the LpxH family. Mn(2+) is required as a cofactor.

It is found in the cell inner membrane. The enzyme catalyses UDP-2-N,3-O-bis[(3R)-3-hydroxytetradecanoyl]-alpha-D-glucosamine + H2O = 2-N,3-O-bis[(3R)-3-hydroxytetradecanoyl]-alpha-D-glucosaminyl 1-phosphate + UMP + 2 H(+). It participates in glycolipid biosynthesis; lipid IV(A) biosynthesis; lipid IV(A) from (3R)-3-hydroxytetradecanoyl-[acyl-carrier-protein] and UDP-N-acetyl-alpha-D-glucosamine: step 4/6. In terms of biological role, hydrolyzes the pyrophosphate bond of UDP-2,3-diacylglucosamine to yield 2,3-diacylglucosamine 1-phosphate (lipid X) and UMP by catalyzing the attack of water at the alpha-P atom. Involved in the biosynthesis of lipid A, a phosphorylated glycolipid that anchors the lipopolysaccharide to the outer membrane of the cell. The sequence is that of UDP-2,3-diacylglucosamine hydrolase from Pseudomonas putida (strain W619).